The primary structure comprises 104 residues: L-rhamnose mutarotase (104 aa).

Tyr-18 is a binding site for substrate. Catalysis depends on His-22, which acts as the Proton donor. Residues Tyr-41 and 76–77 (WW) contribute to the substrate site.

The protein belongs to the rhamnose mutarotase family. As to quaternary structure, homodimer.

It is found in the cytoplasm. It catalyses the reaction alpha-L-rhamnose = beta-L-rhamnose. Its pathway is carbohydrate metabolism; L-rhamnose metabolism. Its function is as follows. Involved in the anomeric conversion of L-rhamnose. The protein is L-rhamnose mutarotase of Salmonella newport (strain SL254).